Consider the following 500-residue polypeptide: Ribose import ATP-binding protein RbsA (500 aa).

ABC transporter domains lie at 6–242 (LALS…VGRK) and 252–495 (AQQG…VGRN). 38–45 (GENGAGKS) lines the ATP pocket.

It belongs to the ABC transporter superfamily. Ribose importer (TC 3.A.1.2.1) family. As to quaternary structure, the complex is composed of an ATP-binding protein (RbsA), two transmembrane proteins (RbsC) and a solute-binding protein (RbsB).

It localises to the cell inner membrane. It catalyses the reaction D-ribose(out) + ATP + H2O = D-ribose(in) + ADP + phosphate + H(+). In terms of biological role, part of the ABC transporter complex RbsABC involved in ribose import. Responsible for energy coupling to the transport system. In Vibrio cholerae serotype O1 (strain ATCC 39315 / El Tor Inaba N16961), this protein is Ribose import ATP-binding protein RbsA.